A 344-amino-acid polypeptide reads, in one-letter code: Uroporphyrinogen decarboxylase (344 aa).

Residues R23 to R27, D73, Y149, T204, and H321 each bind substrate.

Belongs to the uroporphyrinogen decarboxylase family. As to quaternary structure, homodimer.

It is found in the cytoplasm. It catalyses the reaction uroporphyrinogen III + 4 H(+) = coproporphyrinogen III + 4 CO2. Its pathway is porphyrin-containing compound metabolism; protoporphyrin-IX biosynthesis; coproporphyrinogen-III from 5-aminolevulinate: step 4/4. In terms of biological role, catalyzes the decarboxylation of four acetate groups of uroporphyrinogen-III to yield coproporphyrinogen-III. This Francisella tularensis subsp. holarctica (strain LVS) protein is Uroporphyrinogen decarboxylase.